A 340-amino-acid chain; its full sequence is Putative methionyl-tRNA formyltransferase (340 aa).

The protein belongs to the Fmt family.

The protein resides in the mitochondrion. It localises to the mitochondrion matrix. The protein localises to the cytoplasm. The enzyme catalyses L-methionyl-tRNA(fMet) + (6R)-10-formyltetrahydrofolate = N-formyl-L-methionyl-tRNA(fMet) + (6S)-5,6,7,8-tetrahydrofolate + H(+). Its function is as follows. Formylates methionyl-tRNA in mitochondria and the cytoplasm. Responsible for the formylation of the N-terminally formylated (Nt-formylated) mitochondrial matrix proteins that are encoded by mitochondrial DNA. Nt-formylated proteins in the cytoplasm are strongly up-regulated in stationary phase or upon starvation for specific amino acids and are targeted for degradation by an E3 ubiquitin ligase-mediated fMet/N-end rule pathway. Increased Nt-formylation of cytosolic proteins appears to be important for adaptation to these stresses. The protein is Putative methionyl-tRNA formyltransferase (fmt1) of Schizosaccharomyces pombe (strain 972 / ATCC 24843) (Fission yeast).